The sequence spans 464 residues: Tryprostatin B synthase (464 aa).

Residues methionine 94 and glutamate 102 each coordinate brevianamide F. Dimethylallyl diphosphate-binding residues include arginine 113, lysine 201, and tyrosine 203. Tyrosine 205 contributes to the brevianamide F binding site. Positions 294, 296, 380, 382, 446, and 450 each coordinate dimethylallyl diphosphate.

This sequence belongs to the tryptophan dimethylallyltransferase family.

The catalysed reaction is brevianamide F + dimethylallyl diphosphate = tryprostatin B + diphosphate. It functions in the pathway mycotoxin biosynthesis. Brevianamide F prenyltransferase; part of the gene cluster that mediates the biosynthesis of fumitremorgins, indole alkaloids that carry not only intriguing chemical structures, but also interesting biological and pharmacological activities. The biosynthesis of fumitremorgin-type alkaloids begins by condensation of the two amino acids L-tryptophan and L-proline to brevianamide F, catalyzed by the non-ribosomal peptide synthetase ftmA. Brevianamide F is then prenylated by the prenyltransferase ftmPT1/ftmB in the presence of dimethylallyl diphosphate, resulting in the formation of tryprostatin B. The three cytochrome P450 monooxygenases, ftmP450-1/ftmC, ftmP450-2/ftmE and ftmP450-3/FtmG, are responsible for the conversion of tryprostatin B to 6-hydroxytryprostatin B, tryprostatin A to fumitremorgin C and fumitremorgin C to 12,13-dihydroxyfumitremorgin C, respectively. The putative methyltransferase ftmMT/ftmD is expected for the conversion of 6-hydroxytryprostatin B to tryprostatin A. FtmPT2/FtmH catalyzes the prenylation of 12,13-dihydroxyfumitre-morgin C in the presence of dimethylallyl diphosphate, resulting in the formation of fumitremorgin B. Fumitremorgin B is further converted to verruculogen by ftmOx1/ftmF via the insertion of an endoperoxide bond between the two prenyl moieties. In some fungal species, verruculogen is further converted to fumitremorgin A, but the enzymes involved in this step have not been identified yet. This chain is Tryprostatin B synthase, found in Aspergillus fumigatus (Neosartorya fumigata).